The following is a 574-amino-acid chain: Kelch-like protein 18 (574 aa).

Residues 66-105 (MFTNDMMECKQDEIVMQGMDPSALEALINFAYNGNLAIDQ) form the BTB domain. The BACK domain maps to 140-242 (CLGVRQFAET…RPQFLSDRVQ (103 aa)). Kelch repeat units lie at residues 289–336 (LIYA…VVNG), 337–383 (LLYA…VLDG), 384–430 (QIYV…VFEG), 432–477 (IYVS…SLGS), 479–524 (MFVC…ASCG), and 525–571 (RLYA…CIPL).

Interacts with AURKA. Interacts (via BTB domain) with CUL3. Interacts (via kelch repeats) with UNC119.

Its pathway is protein modification; protein ubiquitination. In terms of biological role, substrate-specific adapter of a BCR (BTB-CUL3-RBX1) E3 ubiquitin-protein ligase complex required for mitotic progression and cytokinesis. The BCR(KLHL18) E3 ubiquitin ligase complex mediates the ubiquitination of AURKA leading to its activation at the centrosome which is required for initiating mitotic entry. Regulates light-and dark-dependent alpha-transducin localization changes in rod photoreceptors through UNC119 ubiquitination and degradation. Preferentially ubiquitinates the unphosphorylated form of UNC119 over the phosphorylated form. In the presence of UNC119, under dark-adapted conditions alpha-transducin mislocalizes from the outer segment to the inner part of rod photoreceptors which leads to decreased photoreceptor damage caused by light. This is Kelch-like protein 18 (KLHL18) from Homo sapiens (Human).